We begin with the raw amino-acid sequence, 122 residues long: MIQTQSMLDVADNSGARRVMCIKVLGGSHRRYAGIGDIIKVTVKEAIPRGKVKKGQVMTAVVVRTRHGVRRADGSIIRFDGNAAVLLNNKQEPIGTRIFGPVTRELRTEKFMKIVSLAPEVL.

The protein belongs to the universal ribosomal protein uL14 family. Part of the 50S ribosomal subunit. Forms a cluster with proteins L3 and L19. In the 70S ribosome, L14 and L19 interact and together make contacts with the 16S rRNA in bridges B5 and B8.

Binds to 23S rRNA. Forms part of two intersubunit bridges in the 70S ribosome. This Pseudomonas savastanoi pv. phaseolicola (strain 1448A / Race 6) (Pseudomonas syringae pv. phaseolicola (strain 1448A / Race 6)) protein is Large ribosomal subunit protein uL14.